An 834-amino-acid chain; its full sequence is Ras GTPase-activating protein 3 (834 aa).

C2 domains lie at 1–112 (MAVE…DTWF) and 123–263 (VQGK…EAWY). A2 is subject to N-acetylalanine. Phosphotyrosine is present on Y66. S77 carries the phosphoserine modification. Position 110 is a phosphothreonine (T110). The Ras-GAP domain maps to 346-561 (GRVVPFISAI…DAVKNFLDLI (216 aa)). The PH domain maps to 576 to 677 (ILLKEGFMIK…WIDILTKVSQ (102 aa)). The segment at 679-715 (NQKRLTVFHPSAYLNGHWLCCRASSDTAIGCTPCTGG) adopts a Btk-type zinc-finger fold. Zn(2+)-binding residues include H687, C698, C699, and C709. Phosphoserine is present on residues S809 and S833.

In terms of biological role, inhibitory regulator of the Ras-cyclic AMP pathway. Binds inositol tetrakisphosphate (IP4). This chain is Ras GTPase-activating protein 3 (Rasa3), found in Rattus norvegicus (Rat).